The primary structure comprises 102 residues: Small ribosomal subunit protein uS10 (102 aa).

Belongs to the universal ribosomal protein uS10 family. As to quaternary structure, part of the 30S ribosomal subunit.

In terms of biological role, involved in the binding of tRNA to the ribosomes. This Parafrankia sp. (strain EAN1pec) protein is Small ribosomal subunit protein uS10.